The following is a 208-amino-acid chain: UPF0637 protein lp_2332 (208 aa).

The protein belongs to the UPF0637 family.

The polypeptide is UPF0637 protein lp_2332 (Lactiplantibacillus plantarum (strain ATCC BAA-793 / NCIMB 8826 / WCFS1) (Lactobacillus plantarum)).